The sequence spans 158 residues: Cytochrome b6-f complex subunit 4 (158 aa).

3 helical membrane passes run 34–54 (LLYI…GLAV), 93–113 (LLGV…PFLE), and 129–149 (TVFL…TLPI).

This sequence belongs to the cytochrome b family. PetD subfamily. As to quaternary structure, the 4 large subunits of the cytochrome b6-f complex are cytochrome b6, subunit IV (17 kDa polypeptide, petD), cytochrome f and the Rieske protein, while the 4 small subunits are petG, petL, petM and petN. The complex functions as a dimer.

It localises to the plastid. The protein resides in the chloroplast thylakoid membrane. In terms of biological role, component of the cytochrome b6-f complex, which mediates electron transfer between photosystem II (PSII) and photosystem I (PSI), cyclic electron flow around PSI, and state transitions. The protein is Cytochrome b6-f complex subunit 4 of Liriodendron tulipifera (Tuliptree).